The primary structure comprises 198 residues: Ribosomal RNA small subunit methyltransferase G (198 aa).

Residues Gly-74, Phe-79, 123–124, and Arg-136 each bind S-adenosyl-L-methionine; that span reads IQ.

Belongs to the methyltransferase superfamily. RNA methyltransferase RsmG family.

The protein resides in the cytoplasm. The enzyme catalyses guanosine(527) in 16S rRNA + S-adenosyl-L-methionine = N(7)-methylguanosine(527) in 16S rRNA + S-adenosyl-L-homocysteine. Its function is as follows. Specifically methylates the N7 position of guanine in position 527 of 16S rRNA. In Orientia tsutsugamushi (strain Boryong) (Rickettsia tsutsugamushi), this protein is Ribosomal RNA small subunit methyltransferase G.